The chain runs to 62 residues: Large ribosomal subunit protein uL30 (62 aa).

The protein belongs to the universal ribosomal protein uL30 family. In terms of assembly, part of the 50S ribosomal subunit.

The sequence is that of Large ribosomal subunit protein uL30 from Roseobacter denitrificans (strain ATCC 33942 / OCh 114) (Erythrobacter sp. (strain OCh 114)).